Consider the following 457-residue polypeptide: Argininosuccinate lyase (457 aa).

This sequence belongs to the lyase 1 family. Argininosuccinate lyase subfamily.

It is found in the cytoplasm. The catalysed reaction is 2-(N(omega)-L-arginino)succinate = fumarate + L-arginine. It functions in the pathway amino-acid biosynthesis; L-arginine biosynthesis; L-arginine from L-ornithine and carbamoyl phosphate: step 3/3. The polypeptide is Argininosuccinate lyase (Escherichia coli O7:K1 (strain IAI39 / ExPEC)).